A 439-amino-acid polypeptide reads, in one-letter code: Ribosomal protein uS12 methylthiotransferase RimO (439 aa).

In terms of domain architecture, MTTase N-terminal spans 3 to 113 (HKVGFVSLGC…VVNAVHQHLP (111 aa)). C12, C48, C77, C144, C148, and C151 together coordinate [4Fe-4S] cluster. The region spanning 130-367 (LTPRHYAYLK…MQVQAEISRN (238 aa)) is the Radical SAM core domain. The 67-residue stretch at 370–436 (KNKIGSTQTV…DYDLYGDLEY (67 aa)) folds into the TRAM domain.

This sequence belongs to the methylthiotransferase family. RimO subfamily. It depends on [4Fe-4S] cluster as a cofactor.

The protein resides in the cytoplasm. The catalysed reaction is L-aspartate(89)-[ribosomal protein uS12]-hydrogen + (sulfur carrier)-SH + AH2 + 2 S-adenosyl-L-methionine = 3-methylsulfanyl-L-aspartate(89)-[ribosomal protein uS12]-hydrogen + (sulfur carrier)-H + 5'-deoxyadenosine + L-methionine + A + S-adenosyl-L-homocysteine + 2 H(+). Catalyzes the methylthiolation of an aspartic acid residue of ribosomal protein uS12. This is Ribosomal protein uS12 methylthiotransferase RimO from Legionella pneumophila (strain Paris).